The chain runs to 293 residues: Bisanhydrobacterioruberin hydratase (293 aa).

Helical transmembrane passes span 36-56, 66-86, 89-109, 134-154, 171-191, 199-219, and 254-274; these read IAVV…EGLL, FVLF…FPLV, RAGL…LVGV, FGLP…VLLL, ATVM…GFWI, GVPW…VLLF, and LFYT…GLLW.

It belongs to the BABR hydratase family.

It is found in the membrane. The catalysed reaction is bacterioruberin = bisanhydrobacterioruberin + 2 H2O. The protein operates within carotenoid biosynthesis. In terms of biological role, involved in the biosynthesis of the acyclic C50 carotenoid bacterioruberin (BR). Catalyzes the reaction that introduces hydroxyl groups to C3'' and C3''' of bisanhydrobacterioruberin (BABR) to generate BR. The polypeptide is Bisanhydrobacterioruberin hydratase (Haloarcula japonica (strain ATCC 49778 / DSM 6131 / JCM 7785 / NBRC 101032 / NCIMB 13157 / TR-1)).